A 134-amino-acid polypeptide reads, in one-letter code: Phosphoribosyl-AMP cyclohydrolase (134 aa).

Asp77 contacts Mg(2+). Residue Cys78 participates in Zn(2+) binding. The Mg(2+) site is built by Asp79 and Asp81. 2 residues coordinate Zn(2+): Cys95 and Cys102.

It belongs to the PRA-CH family. In terms of assembly, homodimer. Mg(2+) is required as a cofactor. It depends on Zn(2+) as a cofactor.

Its subcellular location is the cytoplasm. The catalysed reaction is 1-(5-phospho-beta-D-ribosyl)-5'-AMP + H2O = 1-(5-phospho-beta-D-ribosyl)-5-[(5-phospho-beta-D-ribosylamino)methylideneamino]imidazole-4-carboxamide. It functions in the pathway amino-acid biosynthesis; L-histidine biosynthesis; L-histidine from 5-phospho-alpha-D-ribose 1-diphosphate: step 3/9. Catalyzes the hydrolysis of the adenine ring of phosphoribosyl-AMP. The polypeptide is Phosphoribosyl-AMP cyclohydrolase (Pseudomonas aeruginosa (strain LESB58)).